Consider the following 338-residue polypeptide: Glycerol-3-phosphate dehydrogenase [NAD(P)+] (338 aa).

The NADPH site is built by serine 13, tryptophan 14, and lysine 108. Positions 108, 139, and 141 each coordinate sn-glycerol 3-phosphate. Alanine 143 contacts NADPH. Sn-glycerol 3-phosphate contacts are provided by lysine 194, aspartate 247, serine 257, arginine 258, and asparagine 259. Lysine 194 acts as the Proton acceptor in catalysis. Arginine 258 provides a ligand contact to NADPH. NADPH is bound by residues valine 282 and glutamate 284.

The protein belongs to the NAD-dependent glycerol-3-phosphate dehydrogenase family.

It is found in the cytoplasm. It carries out the reaction sn-glycerol 3-phosphate + NAD(+) = dihydroxyacetone phosphate + NADH + H(+). The enzyme catalyses sn-glycerol 3-phosphate + NADP(+) = dihydroxyacetone phosphate + NADPH + H(+). The protein operates within membrane lipid metabolism; glycerophospholipid metabolism. Its function is as follows. Catalyzes the reduction of the glycolytic intermediate dihydroxyacetone phosphate (DHAP) to sn-glycerol 3-phosphate (G3P), the key precursor for phospholipid synthesis. The polypeptide is Glycerol-3-phosphate dehydrogenase [NAD(P)+] (Listeria monocytogenes serotype 4a (strain HCC23)).